An 893-amino-acid polypeptide reads, in one-letter code: UPF0182 protein CLB_0018 (893 aa).

Helical transmembrane passes span 9 to 29 (IPLF…NFII), 49 to 69 (AIII…WMYY), 94 to 114 (LFFI…SSSY), 154 to 174 (VIIS…FILE), 202 to 222 (LAIV…IKIW), 246 to 266 (FYKI…LSIV), and 273 to 293 (VSIC…ASFL).

This sequence belongs to the UPF0182 family.

Its subcellular location is the cell membrane. This chain is UPF0182 protein CLB_0018, found in Clostridium botulinum (strain ATCC 19397 / Type A).